The sequence spans 1406 residues: DNA-directed RNA polymerase subunit beta' (1406 aa).

Positions 70, 72, 85, and 88 each coordinate Zn(2+). 3 residues coordinate Mg(2+): aspartate 460, aspartate 462, and aspartate 464. Zn(2+) contacts are provided by cysteine 814, cysteine 888, cysteine 895, and cysteine 898.

It belongs to the RNA polymerase beta' chain family. In terms of assembly, the RNAP catalytic core consists of 2 alpha, 1 beta, 1 beta' and 1 omega subunit. When a sigma factor is associated with the core the holoenzyme is formed, which can initiate transcription. The cofactor is Mg(2+). It depends on Zn(2+) as a cofactor.

The catalysed reaction is RNA(n) + a ribonucleoside 5'-triphosphate = RNA(n+1) + diphosphate. In terms of biological role, DNA-dependent RNA polymerase catalyzes the transcription of DNA into RNA using the four ribonucleoside triphosphates as substrates. This chain is DNA-directed RNA polymerase subunit beta', found in Photorhabdus laumondii subsp. laumondii (strain DSM 15139 / CIP 105565 / TT01) (Photorhabdus luminescens subsp. laumondii).